Reading from the N-terminus, the 65-residue chain is Large ribosomal subunit protein bL35 (65 aa).

The tract at residues Met-1–Gln-26 is disordered. The span at Ala-10–Gln-26 shows a compositional bias: basic residues.

It belongs to the bacterial ribosomal protein bL35 family.

This is Large ribosomal subunit protein bL35 from Hydrogenovibrio crunogenus (strain DSM 25203 / XCL-2) (Thiomicrospira crunogena).